A 379-amino-acid chain; its full sequence is SUN domain-containing protein 5 (379 aa).

Residues 1-45 (MPRSSRSPGDPGALLEDVAHNPRPRRIAQRGRNTSRMAEDTSPNM) form a disordered region. The Nuclear portion of the chain corresponds to 1 to 105 (MPRSSRSPGD…LLCQKLMEKT (105 aa)). Positions 31–45 (GRNTSRMAEDTSPNM) are enriched in polar residues. A helical transmembrane segment spans residues 106-122 (GILLLCAFGFWMFSIHL). At 123–379 (PSKMKVWQDD…PHQNPYPKRD (257 aa)) the chain is on the perinuclear space side. A coiled-coil region spans residues 141–182 (LRLYQEKVRHHSGEIQDLRGSMNQLIAKLQEMEAMSDEQKMA). An SUN domain is found at 205–364 (GASIDFEHTS…YRVRVHGSVA (160 aa)).

In terms of assembly, probable homotrimer. Interacts with DNAJB13. Post-translationally, highly glycosylated in the Golgi apparatus during spermiogenesis. As to expression, sperm (at protein level). Widely expressed. Conflictingly shown to be specifically expressed in testis.

It localises to the nucleus inner membrane. The protein resides in the golgi apparatus. In terms of biological role, plays an essential role in anchoring sperm head to the tail. Is responsible for the attachment of the coupling apparatus to the sperm nuclear envelope. The polypeptide is SUN domain-containing protein 5 (SUN5) (Homo sapiens (Human)).